The sequence spans 2038 residues: Homeotic protein female sterile (2038 aa).

The region spanning 34–140 (RNTNQLQYLI…KVFLQKIESM (107 aa)) is the Bromo 1 domain. The disordered stretch occupies residues 145-284 (LELEPVTAKG…TTAMAGGVGG (140 aa)). Low complexity-rich tracts occupy residues 177–209 (GSGTSSAAVTSGPGSGSTKVSVAASSAQQSGLQ) and 268–279 (PGSTNTTTTAMA). The helical transmembrane segment at 330–350 (AAVAAAAAAAAAAAAAAGGAA) threads the bilayer. Positions 396–432 (KGVKRKADTTTPTANAFESPYTQMDSKSAKIATRRES) are disordered. Polar residues predominate over residues 404-421 (TTTPTANAFESPYTQMDS). A helical transmembrane segment spans residues 451–471 (VSGVPGLGGLVAGGVAGVAVA). Residue S452 is modified to Phosphoserine. In terms of domain architecture, Bromo 2 spans 475–584 (EKLSDALKSC…DVFEMRYANI (110 aa)). Disordered stretches follow at residues 590-655 (ANAA…ERSA) and 677-735 (EASA…SVPG). Residues 593–619 (AHHHGHGHGHGHGHGHGHGHGHGHGHG) show a composition bias toward basic residues. Acidic residues predominate over residues 636-649 (SSEDSSDTENESNS). Residues 681–694 (KKKAKKKLKEKKKS) are compositionally biased toward basic residues. Gly residues predominate over residues 711-735 (TGGGANAGGAGGPGSGGHGSVSVPG). The next 3 membrane-spanning stretches (helical) occupy residues 750–770 (LNALLGGSLVGHGGAAVAGGV), 790–810 (MAGGGAAAGAGFGAGVTAAGA), and 816–830 (AGTLAGALAAGAAAG). Disordered stretches follow at residues 832-858 (GGTTAGSGSSKGAKSKGGRGAKGSGAG), 891-956 (AGAA…SYDE), 1016-1139 (CLRK…GGNL), 1217-1260 (AVSA…ATVA), 1384-1416 (QPAGPQQQQQQQQQQPFGHQQQQQQQQQQQQQQ), 1502-1530 (MQQMQLQQQHHQQQQQQTHQQQQQHQQQH), 1580-1616 (IESMMPSPPDKQQLQQHQKVLPPQQSPSDMKLHPNAA), 1645-1728 (WSSL…VAQA), 1745-1918 (AAAA…SGAI), and 1957-2023 (MESG…GQID). The chain crosses the membrane as a helical span at residues 874–894 (GAAGAAAGAGSVGGVGGAGAA). Over residues 910–927 (GAGGGVGGANASAGGAGA) the composition is skewed to gly residues. The NET domain maps to 942–1024 (DSEEEDTAKP…SCLRKKTHKK (83 aa)). Residue S943 is modified to Phosphoserine. Positions 1017 to 1027 (LRKKTHKKPSG) are enriched in basic residues. Residues 1028 to 1046 (KSKDEQMAEKKQELEKRLQ) show a composition bias toward basic and acidic residues. Residues 1079–1100 (SSSSSSSDSSSSSSSDSSSSDS) are compositionally biased toward low complexity. 2 stretches are compositionally biased toward polar residues: residues 1121-1131 (SNGSNVNNPSI) and 1222-1232 (TGQQHNKNGPN). Positions 1645 to 1665 (WSSLASANSPQSHTSSSSSSS) are enriched in low complexity. At S1653 the chain carries Phosphoserine. The segment covering 1680 to 1708 (KAKERDRLKLLEAAEKEKKNQKEAAEKEQ) has biased composition (basic and acidic residues). Composition is skewed to low complexity over residues 1716–1728 (SSSSLTSAAVAQA) and 1745–1760 (AAAAALASSASNPSGG). The chain crosses the membrane as a helical span at residues 1731 to 1751 (IAAATAAAAVTLGAAAAAALA). Over residues 1776–1791 (GDRDRDRDRERERERS) the composition is skewed to basic and acidic residues. The span at 1800-1813 (NGNNSSNSANSNGP) shows a compositional bias: low complexity. Composition is skewed to gly residues over residues 1814 to 1828 (GSAGSGGSGGGGGSG) and 1835 to 1856 (PNSGGGGTANSNSGGGGGGGGP). A compositionally biased stretch (low complexity) spans 1857–1884 (ALLNAGSNSNSGVGSGGAASSNSNSSVG). A compositionally biased stretch (gly residues) spans 1885–1915 (GIVGSGGPGSNSQGSSGGGGGGPASGGGMGS). Residues 1939-1959 (VAAAVAAQAILAASPLGAMES) traverse the membrane as a helical segment. Phosphoserine is present on residues S1980 and S1988. The segment covering 1986-1997 (QSSPAQQSPQDR) has biased composition (low complexity). Residues 1998 to 2017 (AAAKRAEQRRAEQERRRREA) are compositionally biased toward basic and acidic residues.

It localises to the membrane. Functionally, required maternally for proper expression of other homeotic genes involved in pattern formation, such as Ubx. The sequence is that of Homeotic protein female sterile (fs(1)h) from Drosophila melanogaster (Fruit fly).